The primary structure comprises 1155 residues: DNA-directed RNA polymerase subunit beta (1155 aa).

This sequence belongs to the RNA polymerase beta chain family. The RNAP catalytic core consists of 2 alpha, 1 beta, 1 beta' and 1 omega subunit. When a sigma factor is associated with the core the holoenzyme is formed, which can initiate transcription.

It carries out the reaction RNA(n) + a ribonucleoside 5'-triphosphate = RNA(n+1) + diphosphate. In terms of biological role, DNA-dependent RNA polymerase catalyzes the transcription of DNA into RNA using the four ribonucleoside triphosphates as substrates. This Borrelia hermsii (strain HS1 / DAH) protein is DNA-directed RNA polymerase subunit beta.